We begin with the raw amino-acid sequence, 837 residues long: Protein ROD1 (837 aa).

Serine 138 and serine 141 each carry phosphoserine. Lysine 401 is covalently cross-linked (Glycyl lysine isopeptide (Lys-Gly) (interchain with G-Cter in ubiquitin)). Serine 436 is modified (phosphoserine). The PY-motif motif lies at 487–490; it reads PPNY. At serine 536 the chain carries Phosphoserine. The short motif at 656–659 is the PY-motif element; sequence PPAY. Disordered stretches follow at residues 675-726 and 763-837; these read ERPQ…SVSL and SFTS…RDRS. Positions 685-703 are enriched in low complexity; the sequence is TSSLLPLPGSSKSSNNLKR. Residues 716 to 726 are compositionally biased toward polar residues; it reads PRNNSGSSVSL. Phosphoserine occurs at positions 720 and 725. A compositionally biased stretch (low complexity) spans 763-773; the sequence is SFTSNSSSKNN. The segment covering 774 to 792 has biased composition (basic and acidic residues); that stretch reads SHFDKTDSTSDANKPREEE. Residues 805–815 show a composition bias toward low complexity; it reads SSSVRSNNSNS.

This sequence belongs to the arrestin family. As to quaternary structure, interacts with RSP5 via its 2 PY-motifs.

The protein localises to the membrane. Functionally, mediates resistance to o-dinitrobenzene, calcium and zinc. The sequence is that of Protein ROD1 (ROD1) from Saccharomyces cerevisiae (strain ATCC 204508 / S288c) (Baker's yeast).